A 363-amino-acid polypeptide reads, in one-letter code: Cobalt-precorrin-5B C(1)-methyltransferase (363 aa).

It belongs to the CbiD family.

It carries out the reaction Co-precorrin-5B + S-adenosyl-L-methionine = Co-precorrin-6A + S-adenosyl-L-homocysteine. Its pathway is cofactor biosynthesis; adenosylcobalamin biosynthesis; cob(II)yrinate a,c-diamide from sirohydrochlorin (anaerobic route): step 6/10. Catalyzes the methylation of C-1 in cobalt-precorrin-5B to form cobalt-precorrin-6A. In Burkholderia pseudomallei (strain K96243), this protein is Cobalt-precorrin-5B C(1)-methyltransferase.